The following is a 335-amino-acid chain: Dihydroorotate dehydrogenase (quinone) (335 aa).

Residues Ala59–Lys63 and Thr83 each bind FMN. Substrate is bound at residue Lys63. Asn108–Phe112 contacts substrate. Asn136 and Asn169 together coordinate FMN. Asn169 serves as a coordination point for substrate. Catalysis depends on Ser172, which acts as the Nucleophile. Residue Asn174 participates in substrate binding. Positions 214 and 242 each coordinate FMN. Asn243–Thr244 serves as a coordination point for substrate. FMN-binding positions include Gly265, Gly294, and Tyr315–Ser316.

Belongs to the dihydroorotate dehydrogenase family. Type 2 subfamily. In terms of assembly, monomer. FMN serves as cofactor.

The protein resides in the cell membrane. The enzyme catalyses (S)-dihydroorotate + a quinone = orotate + a quinol. It functions in the pathway pyrimidine metabolism; UMP biosynthesis via de novo pathway; orotate from (S)-dihydroorotate (quinone route): step 1/1. Catalyzes the conversion of dihydroorotate to orotate with quinone as electron acceptor. The protein is Dihydroorotate dehydrogenase (quinone) of Neisseria meningitidis serogroup B (strain ATCC BAA-335 / MC58).